The following is a 139-amino-acid chain: Probable disulfide formation protein C 1 (139 aa).

A helical membrane pass occupies residues E8–Y27. A disulfide bridge connects residues C37 and C40. 2 consecutive transmembrane segments (helical) span residues Y42–K61 and Y68–V85. The cysteines at positions 99 and 104 are disulfide-linked. A helical transmembrane segment spans residues G113–V135.

Belongs to the DsbB family. BdbC subfamily.

The protein resides in the cell membrane. Its function is as follows. Required for disulfide bond formation in some proteins. In Bacillus anthracis, this protein is Probable disulfide formation protein C 1 (bdbC1).